The primary structure comprises 855 residues: Spindle and centriole-associated protein 1 (855 aa).

Residues 164–200 (QALNDVDGEEEGTVTSQSGESENENELDNSLNSQSNT) are disordered. The residue at position 235 (threonine 235) is a Phosphothreonine. A compositionally biased stretch (basic residues) spans 300–311 (KPNLHALSKPKK). The tract at residues 300–328 (KPNLHALSKPKKNMLSGSTTSADLPNRTN) is disordered. Positions 314–328 (LSGSTTSADLPNRTN) are enriched in polar residues. Residues 325–437 (NRTNSNLDVL…TQARLRQYMV (113 aa)) adopt a coiled-coil conformation. 2 positions are modified to phosphoserine: serine 640 and serine 644. Residues 725 to 751 (GSMEERIAELNRQSMEARGKLLQLIEQ) are a coiled coil. Phosphoserine is present on residues serine 760, serine 764, and serine 819. The interval 789 to 834 (EAPESSKCSTVSPVSEINTRRSSGATSNSCSPLNATSGSGRFTPLN) is disordered. Residues 794 to 828 (SKCSTVSPVSEINTRRSSGATSNSCSPLNATSGSG) are compositionally biased toward polar residues.

Interacts with CEP120.

It localises to the cytoplasm. The protein resides in the cytoskeleton. It is found in the microtubule organizing center. The protein localises to the centrosome. Its subcellular location is the centriole. It localises to the spindle. Functionally, regulator required for centriole duplication, for proper bipolar spindle formation and chromosome congression in mitosis. This chain is Spindle and centriole-associated protein 1 (SPICE1), found in Pongo abelii (Sumatran orangutan).